The chain runs to 169 residues: Putative phosphoesterase SSP1770 (169 aa).

The active-site Proton donor is H34. 2 short sequence motifs (HXTX) span residues 34–37 (HITI) and 115–118 (HFTI). H115 serves as the catalytic Proton acceptor.

It belongs to the 2H phosphoesterase superfamily. YjcG family.

In Staphylococcus saprophyticus subsp. saprophyticus (strain ATCC 15305 / DSM 20229 / NCIMB 8711 / NCTC 7292 / S-41), this protein is Putative phosphoesterase SSP1770.